A 208-amino-acid chain; its full sequence is CASP-like protein 3A1 (208 aa).

Polar residues-rich tracts occupy residues 1–11 (MGSFANGQNGS) and 17–33 (TPATGSNAALEPPTTSA). Residues 1–33 (MGSFANGQNGSELGIQTPATGSNAALEPPTTSA) are disordered. Residues 1–43 (MGSFANGQNGSELGIQTPATGSNAALEPPTTSAAAPRCPRLGM) lie on the Cytoplasmic side of the membrane. The helical transmembrane segment at 44 to 64 (AMVAARAAALVMALLSVSLMV) threads the bilayer. Over 65–92 (SAKQRGTLAIFGIEIPLYAKWSLSDSLQ) the chain is Extracellular. A helical transmembrane segment spans residues 93 to 113 (SLVGISAAAAAYSLAQLLSIA). At 114-128 (HTALKKAPVVPSRRY) the chain is on the cytoplasmic side. A helical membrane pass occupies residues 129 to 149 (AWMLLAGDQVFAYAMLSAGSA). Residues 150-183 (AAAVANLNRTGVRHTALPNFCKPLPRFCDLSAAS) lie on the Extracellular side of the membrane. Residue Asn157 is glycosylated (N-linked (GlcNAc...) asparagine). A helical transmembrane segment spans residues 184 to 204 (IACAFLGCAFLAASAVIDVIW). Residues 205-208 (LSRL) are Cytoplasmic-facing.

This sequence belongs to the Casparian strip membrane proteins (CASP) family. As to quaternary structure, homodimer and heterodimers.

It localises to the cell membrane. The chain is CASP-like protein 3A1 from Hordeum vulgare subsp. vulgare (Domesticated barley).